A 329-amino-acid chain; its full sequence is Transmembrane protein I329L (329 aa).

Positions 1–31 (MLRVFIFFVFLGSGLTGRIKPQVTCKYFISE) are cleaved as a signal peptide. Asn-32, Asn-39, Asn-44, Asn-76, Asn-82, and Asn-101 each carry an N-linked (GlcNAc...) asparagine; by host glycan. The Extracellular segment spans residues 32 to 239 (NNTWYKYNVT…NTERYKSCYP (208 aa)). The LRR repeat unit spans residues 112-133 (ELKFLDLRYNDLQVIDYNILRK). 2 N-linked (GlcNAc...) asparagine; by host glycosylation sites follow: Asn-185 and Asn-219. The cysteines at positions 195 and 237 are disulfide-linked. A helical transmembrane segment spans residues 240–260 (LVFISILCSCISFLFLFICLL). At 261-329 (RSICKKYSCT…EKKVSCSRRK (69 aa)) the chain is on the cytoplasmic side.

Belongs to the asfivirus I329L family. In terms of processing, highly glycosylated.

It is found in the host endoplasmic reticulum membrane. The protein localises to the host Golgi apparatus membrane. Its function is as follows. Viral TLR3 homolog that probably prevents TLR3 dimerization and subsequent induction of IFN. Inhibits dsRNA-stimulated activation of NF-kB and IRF3. The chain is Transmembrane protein I329L from Ornithodoros (relapsing fever ticks).